We begin with the raw amino-acid sequence, 303 residues long: tRNA pseudouridine synthase-like 1 (303 aa).

The Nucleophile role is filled by D66. Position 84 is a phosphoserine (S84). Residue Y130 coordinates substrate.

It belongs to the tRNA pseudouridine synthase TruA family.

It carries out the reaction a uridine in tRNA = a pseudouridine in tRNA. This is tRNA pseudouridine synthase-like 1 (PUSL1) from Homo sapiens (Human).